The chain runs to 479 residues: MSQFPLSILKTSQPHHQPKSMNAPRSSDARGKRILIDPIDDRISKLPDDVLVMILASLSTEDALKTSVLSTRWKNVWKQVPYLHFDLLSATYESGLIAALSNSVAESITQVINNHNGHLMGCSIHHFAHHCVNGVLENWIRLLTLEKNTRFLSLCNKLGKGRRTNVLRFSPNTFSHPKLATLFLRRYDLVTAHAFKECENLKILKLEGILAEVDVFNTVIASCPSLKVLVLNCMWYNEKTCLKIHNNNLKVLHLDCPHVDCIDVSAALLDIFSIFYFAFAKEQNFVIKAPRLLFNNWTKDLEKVPNMNYNITSHAQEKKNIGHEFVVSGDASYLQKLKSLKVVVDVTNSREVHMLRDILVAWNGVLEELHILFKDNNVPNSKEDSESSIGGTQKKKWEEANLFPNADFRVEVMWMFDFNGSNKKQFALASRFVTQGTVMKKMMIKTSSFFANEKLDNEAVVAKLKELPKGNENLSIECF.

The F-box domain maps to 40–88 (DDRISKLPDDVLVMILASLSTEDALKTSVLSTRWKNVWKQVPYLHFDLL).

The chain is Putative F-box protein At1g67390 from Arabidopsis thaliana (Mouse-ear cress).